A 201-amino-acid chain; its full sequence is MQEFTKLTGVAAPMPLVNIDTDMIIPKQFLKTIQRSGLGKNLFDEMRYNPDGSEIPEFVLNQPAYRDAQIIVAGDNFGCGSSREHAPWALLDFGIRCVISTSFADIFYNNCFKNGILPIVMPPEVVEVLMEDARRGANARMTVDLEAQTVTTSDGQSFPFQVDSFRRHCLMNGLDDIGLTLEKAASIDGFERDLATLRPWV.

It belongs to the LeuD family. LeuD type 1 subfamily. Heterodimer of LeuC and LeuD.

It catalyses the reaction (2R,3S)-3-isopropylmalate = (2S)-2-isopropylmalate. It functions in the pathway amino-acid biosynthesis; L-leucine biosynthesis; L-leucine from 3-methyl-2-oxobutanoate: step 2/4. Catalyzes the isomerization between 2-isopropylmalate and 3-isopropylmalate, via the formation of 2-isopropylmaleate. The polypeptide is 3-isopropylmalate dehydratase small subunit (Cereibacter sphaeroides (strain KD131 / KCTC 12085) (Rhodobacter sphaeroides)).